A 1828-amino-acid chain; its full sequence is Proteasome activator complex subunit 4 (1828 aa).

HEAT repeat units lie at residues 462–506, 985–1024, 1164–1202, 1339–1377, 1621–1659, and 1665–1703; these read PEGP…LVDC, NFCCRDLIPLVLEFLRPERQDVTQQQFKGALYCLLGNHGG, YVLPVRAIRYLVQCLNHDALIVRKMAISTVAGILKQLKR, DAFLPIIKPHLERLVADSHESTQRCAAEIVAGLIRGSKH, PVQVPLVLDVLRQTARSSSWHARYTVLTYIQTMVFYNLF, and EESVQGVRWLILQLMEDEQLEVREMAATTLSGLLQCNFL. The interval 1635–1723 is bromodomain-like (BRDL); that stretch reads ARSSSWHARY…EALCKTRLPK (89 aa).

The protein belongs to the BLM10 family. As to quaternary structure, homodimer. Interacts with the 20S and 26S proteasomes.

Its subcellular location is the cytoplasm. The protein resides in the cytosol. The protein localises to the nucleus. It is found in the nucleus speckle. Functionally, associated component of the proteasome that specifically recognizes acetylated histones and promotes ATP- and ubiquitin-independent degradation of core histones during DNA damage response. Recognizes and binds acetylated histones via its bromodomain-like (BRDL) region and activates the proteasome by opening the gated channel for substrate entry. Binds to the core proteasome via its C-terminus, which occupies the same binding sites as the proteasomal ATPases, opening the closed structure of the proteasome via an active gating mechanism. involved in DNA damage response in somatic cells: binds to acetylated histones and promotes degradation of histones. The polypeptide is Proteasome activator complex subunit 4 (psme4) (Xenopus laevis (African clawed frog)).